Here is a 346-residue protein sequence, read N- to C-terminus: uncharacterized protein (346 aa).

A disordered region spans residues 321–346 (TPWGTHSVAGVGPPPYARSGPASATT).

This is an uncharacterized protein from Mycobacterium tuberculosis (strain CDC 1551 / Oshkosh).